We begin with the raw amino-acid sequence, 275 residues long: Large ribosomal subunit protein uL2 (275 aa).

Disordered stretches follow at residues E35–G55 and V223–N260. Residues R39–V49 show a composition bias toward polar residues.

Belongs to the universal ribosomal protein uL2 family. In terms of assembly, part of the 50S ribosomal subunit. Forms a bridge to the 30S subunit in the 70S ribosome.

Its function is as follows. One of the primary rRNA binding proteins. Required for association of the 30S and 50S subunits to form the 70S ribosome, for tRNA binding and peptide bond formation. It has been suggested to have peptidyltransferase activity; this is somewhat controversial. Makes several contacts with the 16S rRNA in the 70S ribosome. The chain is Large ribosomal subunit protein uL2 from Methylococcus capsulatus (strain ATCC 33009 / NCIMB 11132 / Bath).